We begin with the raw amino-acid sequence, 311 residues long: Aurora kinase (311 aa).

Positions 20–300 constitute a Protein kinase domain; the sequence is FEIGRFLGRG…IEDILRHPFL (281 aa). ATP is bound at residue lysine 49. Aspartate 143 serves as the catalytic Proton acceptor. Residues 189 to 216 form an activation loop region; the sequence is DFGWSVHHPTHGGRRRTQCGTLDYLPPE. Threonine 205 is modified (phosphothreonine; by autocatalysis). The Destruction (D)-box signature appears at 280 to 299; the sequence is MLIRSPEARISIEDILRHPF.

This sequence belongs to the protein kinase superfamily. Ser/Thr protein kinase family. Aurora subfamily. As to quaternary structure, interacts with EB1 (via C-terminal residues 101-238). Post-translationally, phosphorylated in mitosis and cytokinesis. Activated by autophosphorylation at Thr-205.

Its subcellular location is the nucleus. It is found in the cytoplasm. The protein resides in the cytoskeleton. The protein localises to the microtubule organizing center. It localises to the centrosome. Its subcellular location is the spindle. It is found in the spindle pole. The protein resides in the nucleus membrane. It carries out the reaction L-seryl-[protein] + ATP = O-phospho-L-seryl-[protein] + ADP + H(+). It catalyses the reaction L-threonyl-[protein] + ATP = O-phospho-L-threonyl-[protein] + ADP + H(+). Activated by cell-cycle phase specific phosphorylation. Inhibited by ATP-competitive inhibitors N-[4-[[6-Methoxy-7-[3-(4-morpholinyl)propoxy]-4-quinazolinyl]amino]phenyl]benzamide (ZM447439) and cyclopropanecarboxylic acid-(3-(4-(3-trifluoromethylphenylamino)-pyrimidin-2-ylamino)-phenyl)-amide (CFPPA). Inhibition leads to reduced growth, increased cytokinesis, microtubular defects, and increased ploidy of the cells. Its function is as follows. Involved in regulation of the cell cycle. Required for mitotic cell division and cytokinesis. Based on its localization to centrosomes and spindle microtubules, as well as to various cytoskeletal components such as the median body, parental attachment disk, and anterior and posterior-lateral paraflagellar dense rods, may coordinate reorganization and segregation of tubulin-containing structures during mitosis and cytokinesis. May regulate microtubule disassembly by phosphorylating cytoskeletal proteins leading to their destabilization. Phosphorylates EB1 at 'Ser-148' in vitro. Phosphorylates histone H3 in vitro. The sequence is that of Aurora kinase from Giardia intestinalis (strain ATCC 50803 / WB clone C6) (Giardia lamblia).